The following is a 119-amino-acid chain: Large ribosomal subunit protein uL22c (119 aa).

It belongs to the universal ribosomal protein uL22 family. Part of the 50S ribosomal subunit.

Its subcellular location is the plastid. It localises to the chloroplast. Its function is as follows. This protein binds specifically to 23S rRNA. In terms of biological role, the globular domain of the protein is located near the polypeptide exit tunnel on the outside of the subunit, while an extended beta-hairpin is found that lines the wall of the exit tunnel in the center of the 70S ribosome. The polypeptide is Large ribosomal subunit protein uL22c (rpl22) (Angiopteris evecta (Mule's foot fern)).